The chain runs to 594 residues: Zinc finger protein 467 (594 aa).

The tract at residues 1–70 (MRETLEALNS…HTEQAEAPCM (70 aa)) is disordered. A Glycyl lysine isopeptide (Lys-Gly) (interchain with G-Cter in SUMO2) cross-link involves residue Lys-97. C2H2-type zinc fingers lie at residues 160 to 182 (YGCE…QRLH), 188 to 210 (CACP…QRSH), 216 to 238 (FPCS…LRTH), 244 to 266 (YPCA…QKTH), 272 to 294 (FPCT…QRIH), 300 to 322 (YQCT…QRVH), 355 to 377 (FACS…QSLH), 430 to 452 (FFCP…RRVH), 458 to 480 (FACA…SRAH), 486 to 508 (FACA…QAVH), 514 to 536 (HACA…QAIH), and 542 to 564 (FSCP…QRIH). The disordered stretch occupies residues 313-350 (QHLVRHQRVHDAASRTRSSPDIPATPHPPTASLAPSPT). Lys-368 is covalently cross-linked (Glycyl lysine isopeptide (Lys-Gly) (interchain with G-Cter in SUMO2)).

The protein belongs to the krueppel C2H2-type zinc-finger protein family. In terms of assembly, interacts with STAT3. Enhances STAT3 activity by keeping it in the nucleus.

It localises to the nucleus. Its function is as follows. Transcription factor that promotes adipocyte differentiation and suppresses osteoblast differentiation in the bone marrow. Enhances the osteoclast-supporting ability of stromal cells. Binds with STAT3 the consensus sequence 5'-CTTCTGGGAAGA-3' of the acute phase response element (APRE). Transactivates several promoters including FOS, OSM and PPARG. Recruits a histone deacetylase complex. The chain is Zinc finger protein 467 (Znf467) from Rattus norvegicus (Rat).